A 208-amino-acid chain; its full sequence is dTTP/UTP pyrophosphatase (208 aa).

The Proton acceptor role is filled by aspartate 78.

The protein belongs to the Maf family. YhdE subfamily. A divalent metal cation serves as cofactor.

The protein resides in the cytoplasm. It carries out the reaction dTTP + H2O = dTMP + diphosphate + H(+). The enzyme catalyses UTP + H2O = UMP + diphosphate + H(+). Its function is as follows. Nucleoside triphosphate pyrophosphatase that hydrolyzes dTTP and UTP. May have a dual role in cell division arrest and in preventing the incorporation of modified nucleotides into cellular nucleic acids. This chain is dTTP/UTP pyrophosphatase, found in Maricaulis maris (strain MCS10) (Caulobacter maris).